A 57-amino-acid polypeptide reads, in one-letter code: U17-myrmicitoxin-Tb1a (57 aa).

The signal sequence occupies residues 1–29 (MEKNRTNIFSVYLMITFLLISIFITMVMS). The propeptide occupies 30-33 (DGEA). Residues cysteine 42 and cysteine 53 are joined by a disulfide bond. The residue at position 56 (alanine 56) is an Alanine amide.

Post-translationally, O-glycosylated. As to expression, expressed by the venom gland.

The protein resides in the secreted. Functionally, serine protease inhibitor which exhibits antifibrinolytic, antielastolytic and antimicrobial activities. Displays antimicrobial activity against bacteria and fungi. Likely functions in the innate immune response to microbial infection and possibly in the venom, as an antifibrinolytic agent. The chain is U17-myrmicitoxin-Tb1a from Tetramorium bicarinatum (Tramp ant).